A 362-amino-acid polypeptide reads, in one-letter code: NAD(P)H-quinone oxidoreductase subunit 1, chloroplastic (362 aa).

The next 8 membrane-spanning stretches (helical) occupy residues 29–49, 103–123, 128–148, 164–184, 202–222, 247–267, 303–323, and 335–355; these read ILPI…IVWL, IAVI…HFVL, IGVF…LMAG, AAQS…ISLL, FFGW…ISSL, YSGI…LVSS, TMGI…SITI, and LLNL…LLTT.

The protein belongs to the complex I subunit 1 family. In terms of assembly, NDH is composed of at least 16 different subunits, 5 of which are encoded in the nucleus.

Its subcellular location is the plastid. The protein localises to the chloroplast thylakoid membrane. It carries out the reaction a plastoquinone + NADH + (n+1) H(+)(in) = a plastoquinol + NAD(+) + n H(+)(out). It catalyses the reaction a plastoquinone + NADPH + (n+1) H(+)(in) = a plastoquinol + NADP(+) + n H(+)(out). Functionally, NDH shuttles electrons from NAD(P)H:plastoquinone, via FMN and iron-sulfur (Fe-S) centers, to quinones in the photosynthetic chain and possibly in a chloroplast respiratory chain. The immediate electron acceptor for the enzyme in this species is believed to be plastoquinone. Couples the redox reaction to proton translocation, and thus conserves the redox energy in a proton gradient. This chain is NAD(P)H-quinone oxidoreductase subunit 1, chloroplastic, found in Triticum aestivum (Wheat).